A 305-amino-acid chain; its full sequence is tRNA uridine(34) hydroxylase (305 aa).

A Rhodanese domain is found at 125 to 219 (ADENTVVVDT…YLEEVPREQS (95 aa)). Cys179 acts as the Cysteine persulfide intermediate in catalysis.

The protein belongs to the TrhO family.

It carries out the reaction uridine(34) in tRNA + AH2 + O2 = 5-hydroxyuridine(34) in tRNA + A + H2O. Catalyzes oxygen-dependent 5-hydroxyuridine (ho5U) modification at position 34 in tRNAs. This Brucella suis (strain ATCC 23445 / NCTC 10510) protein is tRNA uridine(34) hydroxylase.